The following is a 470-amino-acid chain: Putative multidrug resistance protein MdtD (470 aa).

The Periplasmic segment spans residues 1 to 11 (MTELPDNTRWQ). A helical transmembrane segment spans residues 12-32 (LWIVAFGFFMQSLDTTIVNTA). At 33–48 (LPSMAKSLGESPLHMH) the chain is on the cytoplasmic side. Residues 49 to 69 (MVVVSYVLTVAVMLPASGWLA) form a helical membrane-spanning segment. The Periplasmic portion of the chain corresponds to 70-76 (DKIGVRN). The chain crosses the membrane as a helical span at residues 77-97 (IFFAAIVLFTLGSLFCALSGT). Residues 98–101 (LNQL) are Cytoplasmic-facing. A helical transmembrane segment spans residues 102–124 (VLARVLQGVGGAMMVPVGRLTVM). Over 125-137 (KIVPRAQYMAAMT) the chain is Periplasmic. The chain crosses the membrane as a helical span at residues 138 to 158 (FVTLPGQIGPLLGPALGGVLV). At 159 to 164 (EYASWH) the chain is on the cytoplasmic side. The chain crosses the membrane as a helical span at residues 165-185 (WIFLINIPVGIVGAMATFMLM). The Periplasmic portion of the chain corresponds to 186–196 (PNYTIETRRFD). A helical transmembrane segment spans residues 197–217 (LPGFLLLAIGMAVLTLALDGS). Residues 218-224 (KSMGISP) are Cytoplasmic-facing. Residues 225-245 (WTLAGLAAGGAAAILLYLFHA) form a helical membrane-spanning segment. At 246 to 262 (KKNSGALFSLRLFRTPT) the chain is on the periplasmic side. The helical transmembrane segment at 263-283 (FSLGLLGSFAGRIGSGMLPFM) threads the bilayer. Residues 284 to 285 (TP) are Cytoplasmic-facing. Residues 286 to 306 (VFLQIGLGFSPFHAGLMMIPM) traverse the membrane as a helical segment. At 307 to 341 (VLGSMGMKRIVVQIVNRFGYRRVLVATTLGLALVS) the chain is on the periplasmic side. The chain crosses the membrane as a helical span at residues 342–362 (LLFMSVALLGWYYLLPLVLLL). Over 363 to 395 (QGMVNSARFSSMNTLTLKDLPDTLASSGNSLLS) the chain is Cytoplasmic. A helical membrane pass occupies residues 396–416 (MIMQLSMSIGVTIAGMLLGMF). The Periplasmic segment spans residues 417 to 430 (GQQHIGIDSSATHH). Residues 431–451 (VFMYTWLCMAVIIALPAIIFA) traverse the membrane as a helical segment. Topologically, residues 452 to 470 (RVPNDTQQNMVISRRKRSL) are cytoplasmic.

The protein belongs to the major facilitator superfamily. TCR/Tet family.

The protein localises to the cell inner membrane. The sequence is that of Putative multidrug resistance protein MdtD from Salmonella agona (strain SL483).